The primary structure comprises 590 residues: Arginine--tRNA ligase (590 aa).

The 'HIGH' region signature appears at 132-142; that stretch reads PNTNKPLHLGH.

Belongs to the class-I aminoacyl-tRNA synthetase family. Monomer.

The protein localises to the cytoplasm. It catalyses the reaction tRNA(Arg) + L-arginine + ATP = L-arginyl-tRNA(Arg) + AMP + diphosphate. In Treponema denticola (strain ATCC 35405 / DSM 14222 / CIP 103919 / JCM 8153 / KCTC 15104), this protein is Arginine--tRNA ligase.